The chain runs to 175 residues: dATP triphosphohydrolase (175 aa).

R19 provides a ligand contact to dATP. 6 residues coordinate Co(2+): H34, H66, D67, E70, D75, and D119.

The protein belongs to the Caudovirales dATP triphosphohydrolase family. As to quaternary structure, homohexamer. It depends on Co(2+) as a cofactor. Zn(2+) serves as cofactor.

The enzyme catalyses dATP + H2O = 2'-deoxyadenosine + triphosphate + H(+). It carries out the reaction dADP + H2O = 2'-deoxyadenosine + diphosphate. The catalysed reaction is dAMP + H2O = 2'-deoxyadenosine + phosphate. In terms of biological role, catalyzes the hydrolysis of dATP, dADP and dAMP into dA. This step is essential for Z-genome synthesis (containing aminoadenine instead of adenine). Specifically removes dATP and its precursor dADP from the nucleotide pool of the host, preventing the incorporation of A into the phage genome and favoring the integration of the Z-base into the viral genome. This chain is dATP triphosphohydrolase (datZ), found in Cyanophage S-2L (Cyanobacteria phage S-2L).